The sequence spans 489 residues: MAEKITRETSLPKERSSPQALILGRYEMGKLLGHGTFAKVYLARNVKTNESVAIKVIDKEKVLKGGLIAHIKREISILRRVRHPNIVQLFEVMATKAKIYFVMEYVRGGELFNKVAKGRLKEEVARKYFQQLISAVTFCHARGVYHRDLKPENLLLDENGNLKVSDFGLSAVSDQIRQDGLFHTFCGTPAYVAPEVLARKGYDAAKVDIWSCGVILFVLMAGYLPFHDRNVMAMYKKIYRGEFRCPRWFSTELTRLLSKLLETNPEKRFTFPEIMENSWFKKGFKHIKFYVEDDKLCNVVDDDELESDSVESDRDSAASESEIEYLEPRRRVGGLPRPASLNAFDIISFSQGFDLSGLFDDDGEGSRFVSGAPVSKIISKLEEIAKVVSFTVRKKDCRVSLEGSRQGVKGPLTIAAEIFELTPSLVVVEVKKKGGDKTEYEDFCNNELKPKLQNLTADDVVAEPVAVSAVDETAIPNSPTISFLPSDTE.

A Protein kinase domain is found at 26–280; the sequence is YEMGKLLGHG…FPEIMENSWF (255 aa). ATP is bound by residues 32-40 and K55; that span reads LGHGTFAKV. The active-site Proton acceptor is the D148. The activation loop stretch occupies residues 166 to 195; it reads DFGLSAVSDQIRQDGLFHTFCGTPAYVAPE. Position 170 is a phosphoserine (S170). T184 carries the post-translational modification Phosphothreonine. The region spanning 336-360 is the NAF domain; that stretch reads PRPASLNAFDIISFSQGFDLSGLFD. The segment at 363-392 is PPI; it reads GEGSRFVSGAPVSKIISKLEEIAKVVSFTV.

It belongs to the protein kinase superfamily. CAMK Ser/Thr protein kinase family. SNF1 subfamily. As to quaternary structure, interacts with CBL2 and CBL3. Mn(2+) serves as cofactor. In terms of tissue distribution, expressed in roots and shoots.

It carries out the reaction L-seryl-[protein] + ATP = O-phospho-L-seryl-[protein] + ADP + H(+). It catalyses the reaction L-threonyl-[protein] + ATP = O-phospho-L-threonyl-[protein] + ADP + H(+). Functionally, CIPK serine-threonine protein kinases interact with CBL proteins. Binding of a CBL protein to the regulatory NAF domain of CIPK protein lead to the activation of the kinase in a calcium-dependent manner. This chain is CBL-interacting serine/threonine-protein kinase 12 (CIPK12), found in Arabidopsis thaliana (Mouse-ear cress).